Here is a 404-residue protein sequence, read N- to C-terminus: G1/S-specific cyclin-E2 (404 aa).

Positions 1 to 45 (MSRRSSRLQAKQQPQASQTDSPQEAQIIQAKKRKTAQDVKKRKEE) are disordered. Residues 7–26 (RLQAKQQPQASQTDSPQEAQ) show a composition bias toward polar residues. A Phosphoserine modification is found at serine 21. A compositionally biased stretch (basic and acidic residues) spans 35–45 (TAQDVKKRKEE). Lysine 348 is subject to N6-lactoyllysine. A Phosphoserine modification is found at serine 383. Position 392 is a phosphothreonine (threonine 392).

It belongs to the cyclin family. Cyclin E subfamily. As to quaternary structure, interacts with the CDK2 (in vivo) and CDK3 (in vitro) protein kinases to form a serine/threonine kinase holoenzyme complex. The cyclin subunit imparts substrate specificity to the complex. In terms of processing, phosphorylation by CDK2 triggers its release from CDK2 and degradation via the ubiquitin proteasome pathway. Post-translationally, lactylated at Lys-348. Delactylated by SIRT3.

Its subcellular location is the nucleus. Functionally, essential for the control of the cell cycle at the late G1 and early S phase. This is G1/S-specific cyclin-E2 (CCNE2) from Bos taurus (Bovine).